The following is a 149-amino-acid chain: SKP1-like protein 14 (149 aa).

The tract at residues 91 to 149 (LLAANYLNIKGLLDLSAQTVADRIKDKTPEEIREIFNIENDFTPEEEAAVRKENAWAFE) is interaction with the F-box domain of F-box proteins.

This sequence belongs to the SKP1 family. Part of a SCF (SKP1-cullin-F-box) protein ligase complex. Interacts with CPR1/CPR30, At3g61590, At4g39550 and At5g49610. As to expression, restricted to inflorescences, pollen and leaves.

The protein localises to the nucleus. Its pathway is protein modification; protein ubiquitination. In terms of biological role, involved in ubiquitination and subsequent proteasomal degradation of target proteins. Together with CUL1, RBX1 and a F-box protein, it forms a SCF E3 ubiquitin ligase complex. The functional specificity of this complex depends on the type of F-box protein. In the SCF complex, it serves as an adapter that links the F-box protein to CUL1. This chain is SKP1-like protein 14 (ASK14), found in Arabidopsis thaliana (Mouse-ear cress).